A 346-amino-acid polypeptide reads, in one-letter code: PPE family protein PPE17 (346 aa).

A PPE region spans residues 6 to 159; the sequence is FPPEFNSLNI…LYATMAAAAA (154 aa).

The protein belongs to the mycobacterial PPE family. Interacts with LRR motifs 15-20 of host Toll-like receptor 2 (TLR2).

Its subcellular location is the secreted. It is found in the cell wall. The protein localises to the cell surface. Functionally, induces pro-inflammatory responses. Induces host TLR1/2 heterodimerization, which causes an increased recruitment of IRAK1, MYD88, and protein kinase C epsilon (PRKCE) to the downstream TLR-signaling complex that translocates PRKCE into the nucleus in an IRAK1-dependent manner. PRKCE-mediated phosphorylation allowed the nuclear IRAK3 to be exported to the cytoplasm, leading to increased activation of ERK1/2, stabilization of MAPK phosphatase 1 (MKP1), and induction of TNF-alpha with concomitant down-regulation of MAP kinase p38. In terms of biological role, during M.tuberculosis and HIV-1 co-infection, can stimulate transcription from the long terminal repeat (LTR) of HIV-1 in monocyte/macrophage cells. Interaction with human TLR2 activates the NF-kappa-B transcription factor, which binds to the promoter region of the HIV-1 and induces HIV-1 gene expression. The protein is PPE family protein PPE17 (PPE17) of Mycobacterium tuberculosis (strain ATCC 25618 / H37Rv).